The following is a 206-amino-acid chain: MKPLTPRQQQVFDLIKSKIEDCGMPPTRAEIARELGFRSANAAEEHLKALARKEAIEIIPGASRGIRILLEDAANEEQGLPLIGQVAAGEPILAQEHVEMHYQVDPGMFKPQADFLLRVNGESMKDIGIMDGDLLAVHKTQDVRDGQVVVARVDDDVTVKRLERKGSTVLLHAENEEFSPIHVDLESQHLSIEGLAVGIIRNTDWM.

Residues 28–48 (RAEIARELGFRSANAAEEHLK) constitute a DNA-binding region (H-T-H motif). Residues serine 123 and lysine 160 each act as for autocatalytic cleavage activity in the active site.

The protein belongs to the peptidase S24 family. Homodimer.

It catalyses the reaction Hydrolysis of Ala-|-Gly bond in repressor LexA.. Represses a number of genes involved in the response to DNA damage (SOS response), including recA and lexA. In the presence of single-stranded DNA, RecA interacts with LexA causing an autocatalytic cleavage which disrupts the DNA-binding part of LexA, leading to derepression of the SOS regulon and eventually DNA repair. This Vibrio atlanticus (strain LGP32) (Vibrio splendidus (strain Mel32)) protein is LexA repressor.